A 457-amino-acid polypeptide reads, in one-letter code: Dolichol phosphate-mannose mannosyltransferase (457 aa).

Residues 1 to 12 lie on the Cytoplasmic side of the membrane; the sequence is MKRLAKAAFSQN. Residues 13-33 form a helical membrane-spanning segment; sequence SLTAPIVSTFVYLISVVRVVL. Over 34 to 91 the chain is Extracellular; sequence NGNWPVTSSDTAMFQHIGWMVFSGKRYYIDAWDPKPPLTLELATIIAYISNGDPHLQH. Residues 92–112 form a helical membrane-spanning segment; that stretch reads TLSVVSTIVAGILLTYLISHI. The Cytoplasmic segment spans residues 113–120; that stretch reads TSEITGNQ. A helical membrane pass occupies residues 121-141; that stretch reads FAGLLSGIVFITFPVIHYSAV. Topologically, residues 142 to 173 are extracellular; sequence FGYEPKYFVFLFGLGSIYLSRNPKPILSGAAA. A helical membrane pass occupies residues 174–194; it reads AASAGMWQFAIIFPIISFGII. The Cytoplasmic portion of the chain corresponds to 195–211; the sequence is SRRKSKDLILKYVFGAT. The chain crosses the membrane as a helical span at residues 212-232; sequence IIAFISLLPIYLQGGLVAMTV. The Extracellular portion of the chain corresponds to 233-259; sequence EVIIAPLYAGETQSFLYRLVKGVTHLK. A helical transmembrane segment spans residues 260-280; it reads LMIPIALLGMAGILLGFLDDI. At 281–283 the chain is on the cytoplasmic side; that stretch reads RER. The chain crosses the membrane as a helical span at residues 284-304; it reads WWVVGLLLWFCIQIFILDYDG. The Extracellular segment spans residues 305-307; that stretch reads ADD. The chain crosses the membrane as a helical span at residues 308–328; it reads LFLGIILVSMGIGFAFEKLST. The Cytoplasmic portion of the chain corresponds to 329–337; it reads KYESERINS. The chain crosses the membrane as a helical span at residues 338-358; it reads IVTAVVVCMLIWQVVTLGGVG. The Extracellular segment spans residues 359 to 457; that stretch reads VITNPYSYSG…EEKCGKWRLP (99 aa).

The protein resides in the cell membrane. The protein operates within cell surface structure biogenesis; S-layer biogenesis. It functions in the pathway protein modification; protein glycosylation. In terms of biological role, involved in the assembly of a N-linked pentasaccharide that decorates the S-layer glycoprotein and flagellins. Transfers mannose, the terminal pentasaccharide residue, from its dedicated dolichol phosphate carrier to the protein-bound glycan comprising the first four subunits of the N-linked pentasaccharide. This is Dolichol phosphate-mannose mannosyltransferase (aglS) from Haloferax volcanii (strain ATCC 29605 / DSM 3757 / JCM 8879 / NBRC 14742 / NCIMB 2012 / VKM B-1768 / DS2) (Halobacterium volcanii).